The sequence spans 598 residues: Probable translation initiation factor IF-2 (598 aa).

Positions 3–225 constitute a tr-type G domain; the sequence is LRCPIVSVLG…GLAQKFLEQK (223 aa). The segment at 12 to 19 is G1; that stretch reads GHVDHGKT. 12 to 19 is a binding site for GTP; the sequence is GHVDHGKT. Positions 37-41 are G2; the sequence is GITQH. The tract at residues 76–79 is G3; sequence DTPG. Residues 76-80 and 130-133 each bind GTP; these read DTPGH and NKLD. Residues 130-133 form a G4 region; it reads NKLD. Positions 200 to 202 are G5; the sequence is SAI.

This sequence belongs to the TRAFAC class translation factor GTPase superfamily. Classic translation factor GTPase family. IF-2 subfamily.

Function in general translation initiation by promoting the binding of the formylmethionine-tRNA to ribosomes. Seems to function along with eIF-2. The sequence is that of Probable translation initiation factor IF-2 from Methanococcus vannielii (strain ATCC 35089 / DSM 1224 / JCM 13029 / OCM 148 / SB).